The following is a 346-amino-acid chain: Phosphate acyltransferase (346 aa).

The protein belongs to the PlsX family. As to quaternary structure, homodimer. Probably interacts with PlsY.

The protein resides in the cytoplasm. The enzyme catalyses a fatty acyl-[ACP] + phosphate = an acyl phosphate + holo-[ACP]. The protein operates within lipid metabolism; phospholipid metabolism. In terms of biological role, catalyzes the reversible formation of acyl-phosphate (acyl-PO(4)) from acyl-[acyl-carrier-protein] (acyl-ACP). This enzyme utilizes acyl-ACP as fatty acyl donor, but not acyl-CoA. This is Phosphate acyltransferase from Deinococcus geothermalis (strain DSM 11300 / CIP 105573 / AG-3a).